A 122-amino-acid chain; its full sequence is Succinate dehydrogenase assembly factor 2, mitochondrial (122 aa).

The protein belongs to the SDHAF2 family. Interacts with the flavoprotein subunit within the SDH catalytic dimer.

Its subcellular location is the mitochondrion matrix. Its function is as follows. Plays an essential role in the assembly of succinate dehydrogenase (SDH), an enzyme complex (also referred to as respiratory complex II) that is a component of both the tricarboxylic acid (TCA) cycle and the mitochondrial electron transport chain, and which couples the oxidation of succinate to fumarate with the reduction of ubiquinone (coenzyme Q) to ubiquinol. Required for flavinylation (covalent attachment of FAD) of the flavoprotein subunit of the SDH catalytic dimer. In Caenorhabditis briggsae, this protein is Succinate dehydrogenase assembly factor 2, mitochondrial.